Consider the following 494-residue polypeptide: Endoglucanase 22 (494 aa).

The first 21 residues, 1 to 21, serve as a signal peptide directing secretion; the sequence is MKPLVCSFIVILLILLPTTIS. The active-site Nucleophile is Asp-76. The active site involves His-413. The N-linked (GlcNAc...) asparagine glycan is linked to Asn-468. Glu-473 is an active-site residue.

This sequence belongs to the glycosyl hydrolase 9 (cellulase E) family.

It is found in the secreted. It carries out the reaction Endohydrolysis of (1-&gt;4)-beta-D-glucosidic linkages in cellulose, lichenin and cereal beta-D-glucans.. The protein is Endoglucanase 22 (GH9B16) of Arabidopsis thaliana (Mouse-ear cress).